The sequence spans 2253 residues: MRPGPALLLLGVGLSLSVGRLPLPPVPRGAQAAVSGAPGGLLRGAPGLGVRGGRALLSLRPSAVRAGGAVLSGRGSLCFPHGGTGRRWYCLDLRVLLSAQRLPWPAAPALALVDLQLSARGGRLSLTWSVRLPRSPGRLAWAFRLRLLGPGAARPASPAARVSPRSAAPGPRPQQGFVARTECPTDGPARVMLQAVNSSSHRAVESSVSCQINACVIQRVRINTDQKGAPVRLSMQAEATINASVQLDCPAARAIAQYWQVFSVPAVGQAPDWTQPLDLPQLEIRNSPLFIHIPNNSLQWGVYVFNFTVSITTGNPKMPEVKDSDAVYVWIVRSSLQAVMLGDANITANFTEQLILDGSTSSDPDADSPLQGLQFFWYCTTDPRNYGGDRIILGSKEVCHPEQANLKWPWASGPVLTLLPETLKGDHVYFFRMVIRKDSRTAFSDKRVHVLQGPKAIAHITCIENCERNFIVSDRFSLFLNCTNCASRDFYKWSILSSSGGEMLFDWMGETVTGRNGAYLSIKAFAFRHFLEAEFSISLYLACWSGVTSVFRHSFIINHGPQIGECKINPAKGIALITKFVVQCSNFRDKHVPLTYKIIVSDLHSVGEISSVKENTLGTILYLGPQSTVPPSFLPVGMLASQYGLKIYAQVYDSLGAFSQVTLHATAQAPTDKNSSKTVLNQLLSFTVGPSSLLSTLIQKKDFLPAGYLLYIVASVLNNMKTELPLRDDRVNLRKHLIDQSFLLPVSTLVEIGQVVMTITKLTQKPSEFTWDAQKRATMRVWQANQALQEYQQKDKRFRSEQIEIVSTGILMSLSNILKMTSPHQVVKDPFYVIESLSDTILANKVPGNKTTSMRTPNFNMYVKKVEKWGINQLFRNEKHCRNCFYPTLNVSSVPGLSANGPISTMFCDFTNDLFPWLNDQENTSVEVSGFRMTGVADNGSVLEITPDVAEVYLVRKNLTFAAFNLTVGPNSEVDGSLKKTTGGFSFQVDSTVLREVLVHIVTEVMVLFTVLVYTGSQITPTALVATFLVPHDIPPFASQSALFDPACTVKKARVVCLPVSLLQLIAQHSHSPHCTVSIVLQAPRFVMKLNDKLVRISIFSVQCLDMYGIQSEWREGYCILGEKTSWYEVHCICKNVVRARRQLGTIGLTGIHLHTHYVMAKVIVIPNPVDLRLNIIKSLHQNPVTLFTVLFIILLYVGLAFWALYRDEMDQHLRGHVIVLPDNDPYDNLCYLVTIFTGSRWGSGTRANVFVQLRGTVSTSDVHCLSHPHFTTLYRGSINTFLLTTKSDLGDIHSIRVWHNNEGRSPSWYLSRIKVENLFSRHIWLFICQKWLSVDTTLDRTFHVTHPDERLTRKDFFFIDVSSNLRKNHMWFSIFASVVAKTFNRLQRLSCCLAMLLSSLLCNIMFFNLNRQEQTESRERKYMRSMMIGIESVLITIPVQLLITFLFTCSQRKPQADLKEVSPQKHPLMSEASEHWEEYLRKWHAYETAKVHPREVAKPASKGKPRLPKASPKATSKPKHRHRKAQIKTPETLGPNTNSNNNIEDDQDVHSEQHPSQKDLQQLKKKPRIVLPWWCVYVAWFLVFATSSISSFFIVFYGLTYGYDKSIEWLFASFCSFCQSVLLVQPSKIILLSGFRTNKPKYCKNLSWSTKYKYTEIRLDGMRMHPEEMQRIHDQIVRIRGTRMYQPLTEDEIRIFKRKKRIKRRALLFLSYILTHFIFLALLLILIVLLRHTDCFYYNQFIRDRFSMDLATVTKLEDIYRWLNSVLLPLLHNDLNPTFLPESSSKILGLPLMRQVRAKSSEKMCLPAEKFVQNSIRREIHCHPKYGIDPEDTKNYSGFWNEVDKQAIDESTNGFTYKPQGTQWLYYSYGLLHTYGSGGYALYFFPEQQRFNSTLRLKELQESNWLDEKTWAVVLELTTFNPDINLFCSISVIFEVSQLGVVNTSISLHSFSLADFDRKASAEIYLYVAILIFFLAYVVDEGCIIMQERASYVRSVYNLLNFALKCIFTVLIVLFLRKHFLATGIIRFYLSNPEDFIPFHAVSQVDHIMRIILGFLLFLTILKTLRYSRFFYDVRLAQRAIQAALPGICHMAFVVSVYFFVYMAFGYLVFGQHEWNYSNLIHSTQTVFSYCVSAFQNTEFSNNRILGVLFLSSFMLVMICVLINLFQAVILSAYEEMKQPVYEEPSDEVEAMTYLCRKLRTMFSFLTSQSKAKDEPEFFIDMLYGQPEKNSHRYLGLKTRNINGKKMVYLVV.

The signal sequence occupies residues 1–19 (MRPGPALLLLGVGLSLSVG). Topologically, residues 20–1184 (RLPLPPVPRG…NIIKSLHQNP (1165 aa)) are extracellular. Low complexity predominate over residues 154 to 169 (RPASPAARVSPRSAAP). The disordered stretch occupies residues 154–177 (RPASPAARVSPRSAAPGPRPQQGF). N-linked (GlcNAc...) asparagine glycosylation is found at Asn-197, Asn-242, Asn-295, Asn-306, Asn-345, Asn-349, Asn-481, Asn-674, Asn-849, Asn-890, Asn-923, Asn-939, Asn-958, and Asn-965. In terms of domain architecture, REJ spans 215 to 913 (CVIQRVRINT…STMFCDFTND (699 aa)). A helical membrane pass occupies residues 1185–1205 (VTLFTVLFIILLYVGLAFWAL). Residues 1206–1389 (YRDEMDQHLR…VAKTFNRLQR (184 aa)) lie on the Cytoplasmic side of the membrane. The 118-residue stretch at 1230–1347 (LCYLVTIFTG…TLDRTFHVTH (118 aa)) folds into the PLAT domain. The chain crosses the membrane as a helical span at residues 1390 to 1410 (LSCCLAMLLSSLLCNIMFFNL). Topologically, residues 1411–1427 (NRQEQTESRERKYMRSM) are extracellular. Residues 1428–1448 (MIGIESVLITIPVQLLITFLF) form a helical membrane-spanning segment. The Cytoplasmic segment spans residues 1449–1576 (TCSQRKPQAD…KPRIVLPWWC (128 aa)). The tract at residues 1494 to 1562 (PREVAKPASK…EQHPSQKDLQ (69 aa)) is disordered. The span at 1517–1527 (SKPKHRHRKAQ) shows a compositional bias: basic residues. Positions 1549–1558 (DVHSEQHPSQ) are enriched in basic and acidic residues. Residues 1577–1597 (VYVAWFLVFATSSISSFFIVF) form a helical membrane-spanning segment. The Extracellular segment spans residues 1598 to 1607 (YGLTYGYDKS). Residues 1608–1628 (IEWLFASFCSFCQSVLLVQPS) traverse the membrane as a helical segment. Topologically, residues 1629 to 1708 (KIILLSGFRT…RKKRIKRRAL (80 aa)) are cytoplasmic. The helical transmembrane segment at 1709-1729 (LFLSYILTHFIFLALLLILIV) threads the bilayer. Residues 1730–1966 (LLRHTDCFYY…FDRKASAEIY (237 aa)) lie on the Extracellular side of the membrane. N-linked (GlcNAc...) asparagine glycosylation is found at Asn-1836, Asn-1893, and Asn-1944. Residues 1967–1987 (LYVAILIFFLAYVVDEGCIIM) form a helical membrane-spanning segment. Topologically, residues 1988-1996 (QERASYVRS) are cytoplasmic. Residues 1997–2017 (VYNLLNFALKCIFTVLIVLFL) form a helical membrane-spanning segment. At 2018–2042 (RKHFLATGIIRFYLSNPEDFIPFHA) the chain is on the extracellular side. A helical transmembrane segment spans residues 2043-2063 (VSQVDHIMRIILGFLLFLTIL). The Cytoplasmic portion of the chain corresponds to 2064 to 2091 (KTLRYSRFFYDVRLAQRAIQAALPGICH). The helical transmembrane segment at 2092–2112 (MAFVVSVYFFVYMAFGYLVFG) threads the bilayer. Over 2113 to 2145 (QHEWNYSNLIHSTQTVFSYCVSAFQNTEFSNNR) the chain is Extracellular. The chain crosses the membrane as a helical span at residues 2146–2166 (ILGVLFLSSFMLVMICVLINL). Residues 2167-2253 (FQAVILSAYE…NGKKMVYLVV (87 aa)) are Cytoplasmic-facing.

The protein belongs to the polycystin family. As to expression, exclusively expressed in testis.

Its subcellular location is the cell membrane. The protein resides in the cytoplasmic vesicle. It localises to the secretory vesicle. It is found in the acrosome membrane. The protein localises to the nucleus. In terms of biological role, testis-specific protein that controls sperm transport and the timing of zona pellucida-evoked exocytosis of the sperm acrosome. In Homo sapiens (Human), this protein is Polycystin family receptor for egg jelly.